Reading from the N-terminus, the 400-residue chain is Subtilisin-like protease 7 (400 aa).

An N-terminal signal peptide occupies residues 1-20; the sequence is MGFITKAIPLALAAASVING. The propeptide occupies 21–119; the sequence is AEILETRAGV…IERDARVQIN (99 aa). One can recognise an Inhibitor I9 domain in the interval 36-118; that stretch reads KYIVVMNDGI…YIERDARVQI (83 aa). The 272-residue stretch at 129 to 400 folds into the Peptidase S8 domain; the sequence is SWGLARVGSK…SKLINNGSGM (272 aa). Residues Asp161 and His192 each act as charge relay system in the active site. Asn222 and Asn252 each carry an N-linked (GlcNAc...) asparagine glycan. Residue Ser346 is the Charge relay system of the active site. Asn396 is a glycosylation site (N-linked (GlcNAc...) asparagine).

Belongs to the peptidase S8 family.

Its subcellular location is the secreted. Functionally, secreted subtilisin-like serine protease with keratinolytic activity that contributes to pathogenicity. This chain is Subtilisin-like protease 7 (SUB7), found in Trichophyton soudanense.